We begin with the raw amino-acid sequence, 615 residues long: DNA mismatch repair protein MutL (615 aa).

A disordered region spans residues 369–397; that stretch reads REPVAPRYTPAPASGSRPAAPWPNAQPGY. Residues 378–391 are compositionally biased toward low complexity; the sequence is PAPASGSRPAAPWP.

This sequence belongs to the DNA mismatch repair MutL/HexB family.

Its function is as follows. This protein is involved in the repair of mismatches in DNA. It is required for dam-dependent methyl-directed DNA mismatch repair. May act as a 'molecular matchmaker', a protein that promotes the formation of a stable complex between two or more DNA-binding proteins in an ATP-dependent manner without itself being part of a final effector complex. The chain is DNA mismatch repair protein MutL from Escherichia coli (strain SMS-3-5 / SECEC).